Reading from the N-terminus, the 206-residue chain is Large ribosomal subunit protein uL4 (206 aa).

Positions 47-75 (GTQSAKTRAEVSGGGIKPWRQKGTGRARQ) are disordered.

It belongs to the universal ribosomal protein uL4 family. Part of the 50S ribosomal subunit.

In terms of biological role, one of the primary rRNA binding proteins, this protein initially binds near the 5'-end of the 23S rRNA. It is important during the early stages of 50S assembly. It makes multiple contacts with different domains of the 23S rRNA in the assembled 50S subunit and ribosome. Forms part of the polypeptide exit tunnel. This is Large ribosomal subunit protein uL4 from Clostridium botulinum (strain 657 / Type Ba4).